The sequence spans 57 residues: uncharacterized protein (57 aa).

The next 2 membrane-spanning stretches (helical) occupy residues 2-22 and 29-49; these read LLVV…LRSV and GFLL…MTVI.

The protein resides in the cell membrane. This is an uncharacterized protein from Bacillus subtilis (strain 168).